A 490-amino-acid polypeptide reads, in one-letter code: GTPase Der (490 aa).

2 EngA-type G domains span residues 3 to 166 and 203 to 376; these read PVVA…MEDL and IKLA…DSST. Residues 9–16, 56–60, 118–121, 209–216, 256–260, and 321–324 contribute to the GTP site; these read GRPNVGKS, DTGGI, NKTD, DTAGV, and NKWD. A KH-like domain is found at 377-461; that stretch reads RRVGTSMLTR…PIRIQFKEGE (85 aa).

It belongs to the TRAFAC class TrmE-Era-EngA-EngB-Septin-like GTPase superfamily. EngA (Der) GTPase family. Associates with the 50S ribosomal subunit.

Its function is as follows. GTPase that plays an essential role in the late steps of ribosome biogenesis. This chain is GTPase Der, found in Escherichia fergusonii (strain ATCC 35469 / DSM 13698 / CCUG 18766 / IAM 14443 / JCM 21226 / LMG 7866 / NBRC 102419 / NCTC 12128 / CDC 0568-73).